Reading from the N-terminus, the 262-residue chain is tRNA pseudouridine synthase A (262 aa).

Residue Asp-52 is the Nucleophile of the active site. Residue Tyr-110 participates in substrate binding.

This sequence belongs to the tRNA pseudouridine synthase TruA family. In terms of assembly, homodimer.

It catalyses the reaction uridine(38/39/40) in tRNA = pseudouridine(38/39/40) in tRNA. Functionally, formation of pseudouridine at positions 38, 39 and 40 in the anticodon stem and loop of transfer RNAs. This Hydrogenovibrio crunogenus (strain DSM 25203 / XCL-2) (Thiomicrospira crunogena) protein is tRNA pseudouridine synthase A.